We begin with the raw amino-acid sequence, 70 residues long: Translation initiation factor IF-1 (70 aa).

The S1-like domain maps to 1–70 (MKNDKLFLTG…LKLGRITQRK (70 aa)).

This sequence belongs to the IF-1 family. In terms of assembly, component of the 30S ribosomal translation pre-initiation complex which assembles on the 30S ribosome in the order IF-2 and IF-3, IF-1 and N-formylmethionyl-tRNA(fMet); mRNA recruitment can occur at any time during PIC assembly.

It is found in the cytoplasm. Its function is as follows. One of the essential components for the initiation of protein synthesis. Stabilizes the binding of IF-2 and IF-3 on the 30S subunit to which N-formylmethionyl-tRNA(fMet) subsequently binds. Helps modulate mRNA selection, yielding the 30S pre-initiation complex (PIC). Upon addition of the 50S ribosomal subunit IF-1, IF-2 and IF-3 are released leaving the mature 70S translation initiation complex. In Mycoplasma genitalium (strain ATCC 33530 / DSM 19775 / NCTC 10195 / G37) (Mycoplasmoides genitalium), this protein is Translation initiation factor IF-1.